We begin with the raw amino-acid sequence, 226 residues long: Brachyurin (226 aa).

One can recognise a Peptidase S1 domain in the interval 1–223 (IVGGVEAVPN…FLDWIQTQTG (223 aa)). The cysteines at positions 26 and 42 are disulfide-linked. Residues His-41 and Asp-87 each act as charge relay system in the active site. 2 cysteine pairs are disulfide-bonded: Cys-151–Cys-164 and Cys-174–Cys-200. Catalysis depends on Ser-178, which acts as the Charge relay system.

This sequence belongs to the peptidase S1 family.

It catalyses the reaction Hydrolysis of proteins, with broad specificity for peptide bonds. Native collagen is cleaved about 75% of the length of the molecule from the N-terminus. Low activity on small molecule substrates of both trypsin and chymotrypsin.. Its function is as follows. This enzyme is a serine protease capable of degrading the native triple helix of collagen. The polypeptide is Brachyurin (Leptuca pugilator (Atlantic sand fiddler crab)).